The sequence spans 266 residues: Chymotrypsin-like elastase family member 1 (266 aa).

A signal peptide spans Met-1 to Ser-16. Positions Thr-17–Arg-26 are cleaved as a propeptide — activation peptide. The 238-residue stretch at Val-27–Ala-264 folds into the Peptidase S1 domain. Cys-56 and Cys-72 form a disulfide bridge. The active-site Charge relay system is the His-71. Ca(2+)-binding residues include Asp-85, Asn-87, Gln-90, and Glu-95. N-linked (GlcNAc...) asparagine glycosylation is present at Asn-87. Residue Asp-119 is the Charge relay system of the active site. 3 cysteine pairs are disulfide-bonded: Cys-153–Cys-220, Cys-184–Cys-200, and Cys-210–Cys-240. The active-site Charge relay system is Ser-214. Residues Asn-241 and Asn-260 are each glycosylated (N-linked (GlcNAc...) asparagine).

Belongs to the peptidase S1 family. Elastase subfamily. Requires Ca(2+) as cofactor.

The protein localises to the secreted. The catalysed reaction is Hydrolysis of proteins, including elastin. Preferential cleavage: Ala-|-Xaa.. In terms of biological role, serine proteases that hydrolyze many proteins in addition to elastin. The polypeptide is Chymotrypsin-like elastase family member 1 (CELA1) (Macaca fascicularis (Crab-eating macaque)).